The primary structure comprises 353 residues: Photosystem II D2 protein (353 aa).

Residue Thr-2 is modified to N-acetylthreonine. Residue Thr-2 is modified to Phosphothreonine. The helical transmembrane segment at 41-61 (CAYFAVGGWFTGTTFVTSWYT) threads the bilayer. His-118 is a binding site for chlorophyll a. Residues 125–141 (GFMLRQFELARSVQLRP) form a helical membrane-spanning segment. Pheophytin a contacts are provided by Gln-130 and Asn-143. A helical membrane pass occupies residues 153–166 (VFVSVFLIYPLGQS). A chlorophyll a-binding site is contributed by His-198. The chain crosses the membrane as a helical span at residues 208 to 228 (AALLCAIHGATVENTLFEDGD). Residues His-215 and Phe-262 each coordinate a plastoquinone. Position 215 (His-215) interacts with Fe cation. A Fe cation-binding site is contributed by His-269. The helical transmembrane segment at 279–295 (GLWMSALGVVGLALNLR) threads the bilayer.

Belongs to the reaction center PufL/M/PsbA/D family. PSII is composed of 1 copy each of membrane proteins PsbA, PsbB, PsbC, PsbD, PsbE, PsbF, PsbH, PsbI, PsbJ, PsbK, PsbL, PsbM, PsbT, PsbX, PsbY, PsbZ, Psb30/Ycf12, at least 3 peripheral proteins of the oxygen-evolving complex and a large number of cofactors. It forms dimeric complexes. The D1/D2 heterodimer binds P680, chlorophylls that are the primary electron donor of PSII, and subsequent electron acceptors. It shares a non-heme iron and each subunit binds pheophytin, quinone, additional chlorophylls, carotenoids and lipids. There is also a Cl(-1) ion associated with D1 and D2, which is required for oxygen evolution. The PSII complex binds additional chlorophylls, carotenoids and specific lipids. is required as a cofactor.

The protein localises to the plastid. It is found in the chloroplast thylakoid membrane. It catalyses the reaction 2 a plastoquinone + 4 hnu + 2 H2O = 2 a plastoquinol + O2. Photosystem II (PSII) is a light-driven water:plastoquinone oxidoreductase that uses light energy to abstract electrons from H(2)O, generating O(2) and a proton gradient subsequently used for ATP formation. It consists of a core antenna complex that captures photons, and an electron transfer chain that converts photonic excitation into a charge separation. The D1/D2 (PsbA/PsbD) reaction center heterodimer binds P680, the primary electron donor of PSII as well as several subsequent electron acceptors. D2 is needed for assembly of a stable PSII complex. The protein is Photosystem II D2 protein of Solanum bulbocastanum (Wild potato).